The chain runs to 34 residues: Photosystem II reaction center protein M (34 aa).

Residues 5-25 (ILGLTATALFIIIPTSFLLIL) traverse the membrane as a helical segment.

Belongs to the PsbM family. As to quaternary structure, PSII is composed of 1 copy each of membrane proteins PsbA, PsbB, PsbC, PsbD, PsbE, PsbF, PsbH, PsbI, PsbJ, PsbK, PsbL, PsbM, PsbT, PsbX, PsbY, PsbZ, Psb30/Ycf12, at least 3 peripheral proteins of the oxygen-evolving complex and a large number of cofactors. It forms dimeric complexes.

It is found in the plastid. It localises to the chloroplast thylakoid membrane. One of the components of the core complex of photosystem II (PSII). PSII is a light-driven water:plastoquinone oxidoreductase that uses light energy to abstract electrons from H(2)O, generating O(2) and a proton gradient subsequently used for ATP formation. It consists of a core antenna complex that captures photons, and an electron transfer chain that converts photonic excitation into a charge separation. This subunit is found at the monomer-monomer interface. This is Photosystem II reaction center protein M from Stigeoclonium helveticum (Green alga).